The chain runs to 167 residues: Large ribosomal subunit protein uL23 (167 aa).

The segment at 1–130 (MNVNEIIKGP…ELEAKNKEIA (130 aa)) is large ribosomal subunit protein uL23. Disordered stretches follow at residues 91 to 112 (FEDESPQDQKDSETISENTDEK) and 137 to 167 (QAELAKKESETNENQEKKIENQTENQENSAK). 2 stretches are compositionally biased toward basic and acidic residues: residues 97–112 (QDQKDSETISENTDEK) and 137–157 (QAELAKKESETNENQEKKIEN). The segment at 131–167 (EKLAKKQAELAKKESETNENQEKKIENQTENQENSAK) is unknown. The span at 158 to 167 (QTENQENSAK) shows a compositional bias: polar residues.

This sequence belongs to the universal ribosomal protein uL23 family. As to quaternary structure, part of the 50S ribosomal subunit. Contacts protein L29, and trigger factor when it is bound to the ribosome.

In terms of biological role, one of the early assembly proteins it binds 23S rRNA. One of the proteins that surrounds the polypeptide exit tunnel on the outside of the ribosome. Forms the main docking site for trigger factor binding to the ribosome. This is Large ribosomal subunit protein uL23 from Mesomycoplasma hyopneumoniae (strain 7448) (Mycoplasma hyopneumoniae).